A 152-amino-acid chain; its full sequence is 3-hydroxyacyl-[acyl-carrier-protein] dehydratase FabZ (152 aa).

Residue H58 is part of the active site.

The protein belongs to the thioester dehydratase family. FabZ subfamily.

Its subcellular location is the cytoplasm. It carries out the reaction a (3R)-hydroxyacyl-[ACP] = a (2E)-enoyl-[ACP] + H2O. In terms of biological role, involved in unsaturated fatty acids biosynthesis. Catalyzes the dehydration of short chain beta-hydroxyacyl-ACPs and long chain saturated and unsaturated beta-hydroxyacyl-ACPs. The sequence is that of 3-hydroxyacyl-[acyl-carrier-protein] dehydratase FabZ from Prochlorococcus marinus (strain MIT 9301).